The chain runs to 299 residues: Rhodanese-like/PpiC domain-containing protein 12, chloroplastic (299 aa).

Residues 1–81 constitute a chloroplast transit peptide; sequence MFRVTGTLSA…SGFPALKMRA (81 aa). Ser-82 carries the N-acetylserine modification. The 91-residue stretch at 93–183 folds into the PpiC domain; that stretch reads SREILVQHLL…FGLHLLQVLS (91 aa). One can recognise a Rhodanese domain in the interval 205 to 297; that stretch reads FMDEAQLIDV…YSLKVDPSIP (93 aa). Residue Cys-257 is the Cysteine persulfide intermediate of the active site.

It is found in the plastid. The protein resides in the chloroplast. This Arabidopsis thaliana (Mouse-ear cress) protein is Rhodanese-like/PpiC domain-containing protein 12, chloroplastic.